We begin with the raw amino-acid sequence, 401 residues long: Acetate kinase (401 aa).

N9 contacts Mg(2+). Residue K16 participates in ATP binding. R88 is a binding site for substrate. Residue D147 is the Proton donor/acceptor of the active site. Residues 207-211 (HLGNG), 282-284 (DCR), and 333-337 (GIGEN) contribute to the ATP site. Position 388 (E388) interacts with Mg(2+).

This sequence belongs to the acetokinase family. In terms of assembly, homodimer. The cofactor is Mg(2+). Requires Mn(2+) as cofactor.

The protein localises to the cytoplasm. It carries out the reaction acetate + ATP = acetyl phosphate + ADP. It functions in the pathway metabolic intermediate biosynthesis; acetyl-CoA biosynthesis; acetyl-CoA from acetate: step 1/2. Its function is as follows. Catalyzes the formation of acetyl phosphate from acetate and ATP. Can also catalyze the reverse reaction. This is Acetate kinase from Haemophilus influenzae (strain ATCC 51907 / DSM 11121 / KW20 / Rd).